The following is a 122-amino-acid chain: NADPH-dependent 7-cyano-7-deazaguanine reductase (122 aa).

Catalysis depends on cysteine 34, which acts as the Thioimide intermediate. Residue aspartate 41 is the Proton donor of the active site. Residues 56-58 (VEL) and 75-76 (HE) contribute to the substrate site.

Belongs to the GTP cyclohydrolase I family. QueF type 1 subfamily.

Its subcellular location is the cytoplasm. It catalyses the reaction 7-aminomethyl-7-carbaguanine + 2 NADP(+) = 7-cyano-7-deazaguanine + 2 NADPH + 3 H(+). It participates in tRNA modification; tRNA-queuosine biosynthesis. In terms of biological role, catalyzes the NADPH-dependent reduction of 7-cyano-7-deazaguanine (preQ0) to 7-aminomethyl-7-deazaguanine (preQ1). The protein is NADPH-dependent 7-cyano-7-deazaguanine reductase of Anaeromyxobacter dehalogenans (strain 2CP-C).